We begin with the raw amino-acid sequence, 565 residues long: Formate--tetrahydrofolate ligase (565 aa).

Residue 73 to 80 (TPAGEGKS) participates in ATP binding.

This sequence belongs to the formate--tetrahydrofolate ligase family.

The enzyme catalyses (6S)-5,6,7,8-tetrahydrofolate + formate + ATP = (6R)-10-formyltetrahydrofolate + ADP + phosphate. It participates in one-carbon metabolism; tetrahydrofolate interconversion. This Arthrobacter sp. (strain FB24) protein is Formate--tetrahydrofolate ligase.